Here is a 143-residue protein sequence, read N- to C-terminus: Alpha-S2-casein-like B (143 aa).

An N-terminal signal peptide occupies residues 1–15 (MKFIILTCLLAVALA).

This sequence belongs to the alpha-casein family. Mammary gland specific. Secreted in milk.

The protein localises to the secreted. Important role in the capacity of milk to transport calcium phosphate. This chain is Alpha-S2-casein-like B (Csn1s2b), found in Mus musculus (Mouse).